Here is a 380-residue protein sequence, read N- to C-terminus: Probable tRNA sulfurtransferase (380 aa).

One can recognise a THUMP domain in the interval 58 to 162 (EEVIERLKKV…MAFVYAGVIE (105 aa)). ATP contacts are provided by residues 178–179 (LL), 203–204 (YF), R260, G282, and Q291.

It belongs to the ThiI family.

The protein localises to the cytoplasm. The enzyme catalyses [ThiI sulfur-carrier protein]-S-sulfanyl-L-cysteine + a uridine in tRNA + 2 reduced [2Fe-2S]-[ferredoxin] + ATP + H(+) = [ThiI sulfur-carrier protein]-L-cysteine + a 4-thiouridine in tRNA + 2 oxidized [2Fe-2S]-[ferredoxin] + AMP + diphosphate. The catalysed reaction is [ThiS sulfur-carrier protein]-C-terminal Gly-Gly-AMP + S-sulfanyl-L-cysteinyl-[cysteine desulfurase] + AH2 = [ThiS sulfur-carrier protein]-C-terminal-Gly-aminoethanethioate + L-cysteinyl-[cysteine desulfurase] + A + AMP + 2 H(+). The protein operates within cofactor biosynthesis; thiamine diphosphate biosynthesis. Catalyzes the ATP-dependent transfer of a sulfur to tRNA to produce 4-thiouridine in position 8 of tRNAs, which functions as a near-UV photosensor. Also catalyzes the transfer of sulfur to the sulfur carrier protein ThiS, forming ThiS-thiocarboxylate. This is a step in the synthesis of thiazole, in the thiamine biosynthesis pathway. The sulfur is donated as persulfide by IscS. In Thermoanaerobacter pseudethanolicus (strain ATCC 33223 / 39E) (Clostridium thermohydrosulfuricum), this protein is Probable tRNA sulfurtransferase.